Reading from the N-terminus, the 837-residue chain is Outer membrane usher protein HifC (837 aa).

The N-terminal stretch at 1-26 (MKTKNFPLNKIAFACTLLLANPVAWA) is a signal peptide. Cys-813 and Cys-833 are oxidised to a cystine.

The protein belongs to the fimbrial export usher family.

The protein localises to the cell outer membrane. Its function is as follows. Essential for piliation. The chain is Outer membrane usher protein HifC (hifC) from Haemophilus influenzae.